The chain runs to 262 residues: Small ribosomal subunit protein uS2 (262 aa).

The segment at 228–262 (VSNEEVAAEQNINLDDKEESEQAETTEENTSVESN) is disordered. Residues 243–254 (DKEESEQAETTE) are compositionally biased toward acidic residues.

Belongs to the universal ribosomal protein uS2 family.

In Staphylococcus epidermidis (strain ATCC 35984 / DSM 28319 / BCRC 17069 / CCUG 31568 / BM 3577 / RP62A), this protein is Small ribosomal subunit protein uS2.